Here is a 193-residue protein sequence, read N- to C-terminus: MRTSEVHRATRETDITLSLDLDGTGAGTIETGIPFFDHMLASFARHGRIDLSVRATGDLAVDPHHTIEDIGIVLGTALAESVGDGRGITRFADAAVPMDEALARVALDVGGRGYLVFEGDFSPVGPGGIPGDLIEHFFHSLCSHAGITAHITVTGRNDHHICEAAFKAFARALRAAVAIDPAIGDVPSTKGSL.

This sequence belongs to the imidazoleglycerol-phosphate dehydratase family.

It is found in the cytoplasm. The enzyme catalyses D-erythro-1-(imidazol-4-yl)glycerol 3-phosphate = 3-(imidazol-4-yl)-2-oxopropyl phosphate + H2O. Its pathway is amino-acid biosynthesis; L-histidine biosynthesis; L-histidine from 5-phospho-alpha-D-ribose 1-diphosphate: step 6/9. The sequence is that of Imidazoleglycerol-phosphate dehydratase from Methanoculleus marisnigri (strain ATCC 35101 / DSM 1498 / JR1).